The sequence spans 125 residues: Protein ApaG (125 aa).

The region spanning 3–125 is the ApaG domain; the sequence is TAVTEGIEVT…FPLVVPGSLN (123 aa).

This Anaeromyxobacter dehalogenans (strain 2CP-1 / ATCC BAA-258) protein is Protein ApaG.